Here is a 237-residue protein sequence, read N- to C-terminus: Lectin alpha chain (237 aa).

Mn(2+)-binding residues include Glu8 and Asp10. Ca(2+) is bound by residues Asp10, Tyr12, Asn14, and Asp19. Tyr12 lines the a carbohydrate pocket. Mn(2+) is bound by residues Asp19, His24, and Ser34. Leu99 to Tyr100 is a binding site for a carbohydrate. Residue Asp208 coordinates Ca(2+). Arg228 contributes to the a carbohydrate binding site.

It belongs to the leguminous lectin family. Equilibrium between homodimer and homotetramer. Oligomerization is pH-dependent with homotetramers forming at pH 6.5 and above. Post-translationally, the beta and gamma chains are produced by partial proteolytic processing of the lectin alpha chain by an asparaginyl endopeptidase. Mixture of 60% alpha lectin and 40% of its beta and gamma proteolytic fragments.

In terms of biological role, D-mannose/D-glucose-binding lectin. Has anti-inflammatory activity in rats. Induces histamine release in mast cells from rat. Induces lymphocyte proliferation and IFNG production. In Dioclea guianensis, this protein is Lectin alpha chain.